Consider the following 83-residue polypeptide: Small ribosomal subunit protein bS16 (83 aa).

This sequence belongs to the bacterial ribosomal protein bS16 family.

In Shewanella baltica (strain OS223), this protein is Small ribosomal subunit protein bS16.